We begin with the raw amino-acid sequence, 299 residues long: GTPase Era (299 aa).

Residues 4 to 171 (KSGFVAILGR…ISLLTDNLEE (168 aa)) form the Era-type G domain. The tract at residues 12–19 (GRPNVGKS) is G1. A GTP-binding site is contributed by 12-19 (GRPNVGKS). A G2 region spans residues 38-42 (QTTRN). The segment at 59-62 (DTPG) is G3. GTP is bound by residues 59–63 (DTPGI) and 121–124 (NKID). The G4 stretch occupies residues 121 to 124 (NKID). Positions 150–152 (ISA) are G5. The KH type-2 domain maps to 202–280 (TQQEIPHSVA…YLETWVKVKK (79 aa)).

The protein belongs to the TRAFAC class TrmE-Era-EngA-EngB-Septin-like GTPase superfamily. Era GTPase family. In terms of assembly, monomer.

The protein resides in the cytoplasm. The protein localises to the cell membrane. An essential GTPase that binds both GDP and GTP, with rapid nucleotide exchange. Plays a role in 16S rRNA processing and 30S ribosomal subunit biogenesis and possibly also in cell cycle regulation and energy metabolism. The sequence is that of GTPase Era from Streptococcus uberis (strain ATCC BAA-854 / 0140J).